Reading from the N-terminus, the 390-residue chain is ATP phosphoribosyltransferase regulatory subunit (390 aa).

This sequence belongs to the class-II aminoacyl-tRNA synthetase family. HisZ subfamily. In terms of assembly, heteromultimer composed of HisG and HisZ subunits.

The protein resides in the cytoplasm. It participates in amino-acid biosynthesis; L-histidine biosynthesis; L-histidine from 5-phospho-alpha-D-ribose 1-diphosphate: step 1/9. Required for the first step of histidine biosynthesis. May allow the feedback regulation of ATP phosphoribosyltransferase activity by histidine. The chain is ATP phosphoribosyltransferase regulatory subunit from Nitrosomonas eutropha (strain DSM 101675 / C91 / Nm57).